The following is a 550-amino-acid chain: Metal transporter Nramp4 (550 aa).

Basic and acidic residues predominate over residues 1-13 (MEEGAKIGREHEQ). Positions 1 to 37 (MEEGAKIGREHEQQQQQHGRVNGSGRVAAVGGGSGGG) are disordered. A compositionally biased stretch (low complexity) spans 14–29 (QQQQHGRVNGSGRVAA). Helical transmembrane passes span 72 to 92 (FLAHVGPGFVISIAYLDPSNL), 105 to 125 (SLLWVLLFGFIFVLTVQSLAA), 151 to 171 (LWLLAELGVIAATIPGVLGTA), 177 to 197 (LLHIPFWAGVLACGACTFLIL), 207 to 227 (MEFTISVLMLVMATCFFMELG), 255 to 275 (VAMFGSLVVPHNLFLHSSLVL), 292 to 312 (FFLLENALALFIALLVNVAIV), 354 to 374 (VYGVALLVSGQSCMVATSYAG), 388 to 408 (IIYLVAPCFTLLPSLIICSIG), 416 to 436 (IINIAAIVLSFVLPFALIPLI), 457 to 477 (IAWILSLVIIGINIYFFCTSF), and 492 to 512 (AIISSLVFPFMAAYIAALIYL).

Belongs to the NRAMP (TC 2.A.55) family.

The protein localises to the membrane. Its function is as follows. Probable metal transporter. The protein is Metal transporter Nramp4 (NRAMP4) of Oryza sativa subsp. japonica (Rice).